Reading from the N-terminus, the 402-residue chain is CCA-adding enzyme (402 aa).

ATP is bound by residues Gly32 and Arg35. Gly32 and Arg35 together coordinate CTP. The Mg(2+) site is built by Asp45 and Asp47. 5 residues coordinate ATP: Arg116, Asp159, Arg162, Arg165, and Arg168. Arg116, Asp159, Arg162, Arg165, and Arg168 together coordinate CTP.

The protein belongs to the tRNA nucleotidyltransferase/poly(A) polymerase family. Bacterial CCA-adding enzyme type 3 subfamily. Homodimer. Mg(2+) serves as cofactor.

It carries out the reaction a tRNA precursor + 2 CTP + ATP = a tRNA with a 3' CCA end + 3 diphosphate. It catalyses the reaction a tRNA with a 3' CCA end + 2 CTP + ATP = a tRNA with a 3' CCACCA end + 3 diphosphate. Catalyzes the addition and repair of the essential 3'-terminal CCA sequence in tRNAs without using a nucleic acid template. Adds these three nucleotides in the order of C, C, and A to the tRNA nucleotide-73, using CTP and ATP as substrates and producing inorganic pyrophosphate. tRNA 3'-terminal CCA addition is required both for tRNA processing and repair. Also involved in tRNA surveillance by mediating tandem CCA addition to generate a CCACCA at the 3' terminus of unstable tRNAs. While stable tRNAs receive only 3'-terminal CCA, unstable tRNAs are marked with CCACCA and rapidly degraded. This chain is CCA-adding enzyme, found in Streptococcus pyogenes serotype M1.